The chain runs to 553 residues: Glycerol kinase 2 (553 aa).

Thr20 contributes to the substrate binding site. ATP is bound at residue Arg24. Residues Arg94, Tyr148, and Asp259 each coordinate substrate. Residues Thr281, Gly326, and Gly427–Asn431 each bind ATP. A helical transmembrane segment spans residues Ile526 to Ala546.

It belongs to the FGGY kinase family. In terms of assembly, interacts with ARMC12. Interacts with PLD6. As to expression, testis-specific. Expressed in the midpiece of spermatozoa.

Its subcellular location is the mitochondrion outer membrane. The protein resides in the cytoplasm. It catalyses the reaction glycerol + ATP = sn-glycerol 3-phosphate + ADP + H(+). The protein operates within polyol metabolism; glycerol degradation via glycerol kinase pathway; sn-glycerol 3-phosphate from glycerol: step 1/1. Functionally, key enzyme in the regulation of glycerol uptake and metabolism. Essential for male fertility and sperm mitochondrial sheath formation. Required for proper arrangement of crescent-like mitochondria to form the mitochondrial sheath during spermatogenesis. Can induce mitochondrial clustering through interactions with PLD6 and up-regulation of phosphatidic acid synthesis in the mitochondria. The chain is Glycerol kinase 2 (GK2) from Homo sapiens (Human).